We begin with the raw amino-acid sequence, 870 residues long: H(+)/Cl(-) exchange transporter 6 (870 aa).

Residues 1-80 (MAGCRGSVCC…KKGRRYEAVK (80 aa)) lie on the Cytoplasmic side of the membrane. The next 2 helical transmembrane spans lie at 81 to 113 (WMVVFAIGVCTGLVGLFVDFSVRLFTQLKFGVV) and 128 to 150 (LSLLELLGFNLTFVFLASLLVLI). The Selectivity filter part_1 motif lies at 156-160 (GSGIP). Ser157 contacts chloride. The helical intramembrane region spans 159–166 (IPEIKCYL). Helical transmembrane passes span 176-194 (RLRTLLCKVFGVLFSVSGG) and 200-217 (EGPMIHSGAVVGAGLPQF). The Selectivity filter part_2 motif lies at 198–202 (GKEGP). 2 intramembrane regions (helical) span residues 241–253 (FVSAGAAAGVAAA) and 257–265 (PIGGTLFSL). 3 helical membrane-spanning segments follow: residues 277 to 294 (TWKVLFCSMSATFTLNFF), 335 to 364 (GFFVVMGVIGGLLGATFNCLNKRLAKYRMR), and 371 to 392 (KLVRVLESLLVSLVTTVVVFVA). N-linked (GlcNAc...) asparagine glycosylation is found at Asn410, Asn423, and Asn433. The next 2 helical transmembrane spans lie at 463–482 (PVTLALFFILYFLLACWTFG) and 488–512 (GLFVPSLLCGAAFGRLVANVLKSYI). Residues 488 to 492 (GLFVP) carry the Selectivity filter part_3 motif. Position 490 (Phe490) interacts with chloride. The segment at residues 520-534 (GTFALIGAAAFLGGV) is an intramembrane region (helical). The note=Loop between two helices intramembrane region spans 535-537 (VRM). An intramembrane region (helical) is located at residues 538–549 (TISLTVILIEST). The note=Loop between two helices intramembrane region spans 550-553 (NEIT). Residues 554 to 572 (YGLPIMVTLMVAKWTGDLF) form a helical membrane-spanning segment. The Cytoplasmic portion of the chain corresponds to 573–870 (NKGIYDVHIG…ARLRQHYQTL (298 aa)). Tyr577 provides a ligand contact to chloride. The CBS 1 domain occupies 606-663 (MEPNLTYVYPHTRIQSLVSILRTTVHHAFPVVTENRGNEKEFMKGNQLISNNIKFKKS). 631–633 (HHA) contacts ATP. At Ser774 the chain carries Phosphoserine. The CBS 2 domain maps to 808 to 869 (MNPSPFTVSP…QARLRQHYQT (62 aa)). 850 to 853 (TRHN) is a binding site for ATP.

The protein belongs to the chloride channel (TC 2.A.49) family. ClC-6/CLCN6 subfamily. N-glycosylated on several asparagine residues. In terms of tissue distribution, detected in whole brain and in hippocampus neurons (at protein level). Detected in brain, trigeminus, dorsal root ganglion, spinal cord, eye, kidney, testis, skeletal muscle, thymus and pancreas. Isoform ClC-6c is expressed only in kidney.

Its subcellular location is the late endosome membrane. The enzyme catalyses 2 chloride(in) + H(+)(out) = 2 chloride(out) + H(+)(in). Its function is as follows. Voltage-gated channel mediating the exchange of chloride ions against protons. Functions as antiporter and contributes to the acidification of the late endosome lumen. The CLC channel family contains both chloride channels and proton-coupled anion transporters that exchange chloride or another anion for protons. The presence of conserved gating glutamate residues is typical for family members that function as antiporters. The polypeptide is H(+)/Cl(-) exchange transporter 6 (Mus musculus (Mouse)).